Reading from the N-terminus, the 265-residue chain is MQIRQSVKFKKPLIHYITNPISINDCANMILAVGAKPIMAEHPLEVSEITSISESLGINLGNITDNKMKSMLISGKISYEKKIPQVIDLVGVGCSKLRLDYAKKFILECHPNVIKGNMSEMKAIYGIKSSAKGIDVGACDIITEQNFDENIEMIKRLSMETGSVVAATGVVDIISNGTYTYIISNGCEMLSMITGTGCMLTGIIASYISSGNILEGTALAIVLMGICGELSQHVKGTGSFRNELIDNIFSISDDIIIKKIRINSY.

M39 provides a ligand contact to substrate. 2 residues coordinate ATP: K115 and T168. A substrate-binding site is contributed by G195.

This sequence belongs to the Thz kinase family. It depends on Mg(2+) as a cofactor.

It carries out the reaction 5-(2-hydroxyethyl)-4-methylthiazole + ATP = 4-methyl-5-(2-phosphooxyethyl)-thiazole + ADP + H(+). It functions in the pathway cofactor biosynthesis; thiamine diphosphate biosynthesis; 4-methyl-5-(2-phosphoethyl)-thiazole from 5-(2-hydroxyethyl)-4-methylthiazole: step 1/1. Its function is as follows. Catalyzes the phosphorylation of the hydroxyl group of 4-methyl-5-beta-hydroxyethylthiazole (THZ). The chain is Hydroxyethylthiazole kinase 2 from Clostridium botulinum (strain Kyoto / Type A2).